Consider the following 385-residue polypeptide: Protein-glutamate methylesterase/protein-glutamine glutaminase (385 aa).

Positions 20 to 138 constitute a Response regulatory domain; the sequence is RVMIVDDSVV…EASAADIFKH (119 aa). Residue Asp71 is modified to 4-aspartylphosphate. The region spanning 189–383 is the CheB-type methylesterase domain; sequence GVTAPRVLLI…PKLVRLFSGD (195 aa). Active-site residues include Ser201, His229, and Asp325.

It belongs to the CheB family. Phosphorylated by CheA. Phosphorylation of the N-terminal regulatory domain activates the methylesterase activity.

The protein resides in the cytoplasm. It catalyses the reaction [protein]-L-glutamate 5-O-methyl ester + H2O = L-glutamyl-[protein] + methanol + H(+). It carries out the reaction L-glutaminyl-[protein] + H2O = L-glutamyl-[protein] + NH4(+). Its function is as follows. Involved in chemotaxis. Part of a chemotaxis signal transduction system that modulates chemotaxis in response to various stimuli. Catalyzes the demethylation of specific methylglutamate residues introduced into the chemoreceptors (methyl-accepting chemotaxis proteins or MCP) by CheR. Also mediates the irreversible deamidation of specific glutamine residues to glutamic acid. The protein is Protein-glutamate methylesterase/protein-glutamine glutaminase of Rhodopseudomonas palustris (strain BisB5).